Reading from the N-terminus, the 95-residue chain is Large ribosomal subunit protein bL25 (95 aa).

The protein belongs to the bacterial ribosomal protein bL25 family. Part of the 50S ribosomal subunit; part of the 5S rRNA/L5/L18/L25 subcomplex. Contacts the 5S rRNA. Binds to the 5S rRNA independently of L5 and L18.

Functionally, this is one of the proteins that binds to the 5S RNA in the ribosome where it forms part of the central protuberance. The sequence is that of Large ribosomal subunit protein bL25 from Haemophilus influenzae (strain PittGG).